A 555-amino-acid polypeptide reads, in one-letter code: NADH-ubiquinone oxidoreductase chain 5 (555 aa).

15 helical membrane passes run 37-57 (LAMT…LYAI), 69-89 (FYII…SDNY), 90-110 (IMMF…ISFW), 133-153 (FFML…FDTL), 155-175 (LAAP…LLLA), 197-217 (TPVS…YVLV), 230-250 (LIGI…IAIV), 257-275 (VIAL…AIGI), 287-307 (CHAF…HSYI), 323-343 (LPFS…IPGL), 366-388 (ILYY…VLYL), 406-426 (ENIR…FIGF), 454-474 (WYIK…LVYI), 494-516 (IYYD…GYLN), and 534-554 (RALT…FFFY).

It belongs to the complex I subunit 5 family.

It is found in the mitochondrion inner membrane. The catalysed reaction is a ubiquinone + NADH + 5 H(+)(in) = a ubiquinol + NAD(+) + 4 H(+)(out). Core subunit of the mitochondrial membrane respiratory chain NADH dehydrogenase (Complex I) that is believed to belong to the minimal assembly required for catalysis. Complex I functions in the transfer of electrons from NADH to the respiratory chain. The immediate electron acceptor for the enzyme is believed to be ubiquinone. This chain is NADH-ubiquinone oxidoreductase chain 5 (ND5), found in Candida parapsilosis (Yeast).